We begin with the raw amino-acid sequence, 61 residues long: Antimicrobial peptide 1 (61 aa).

Positions 1 to 24 (LPVAFLKFAIVLILFIAMSAMIEA) are cleaved as a signal peptide. Gln25 carries the post-translational modification Pyrrolidone carboxylic acid. 3 disulfide bridges follow: Cys26-Cys43, Cys33-Cys47, and Cys42-Cys58.

Belongs to the AMP family. In terms of assembly, homodimer. In terms of processing, three disulfide bonds are present. Found only in seeds.

The protein localises to the secreted. In terms of biological role, possesses antifungal activity and is also active on two tested Gram-positive bacteria but is non-toxic for Gram-negative bacteria and cultured human cells. The sequence is that of Antimicrobial peptide 1 (AMP1) from Mirabilis jalapa (Garden four-o'clock).